The chain runs to 259 residues: tRNA pseudouridine synthase A (259 aa).

Asp52 serves as the catalytic Nucleophile. Tyr111 serves as a coordination point for substrate.

This sequence belongs to the tRNA pseudouridine synthase TruA family. Homodimer.

The catalysed reaction is uridine(38/39/40) in tRNA = pseudouridine(38/39/40) in tRNA. In terms of biological role, formation of pseudouridine at positions 38, 39 and 40 in the anticodon stem and loop of transfer RNAs. The sequence is that of tRNA pseudouridine synthase A from Ruegeria sp. (strain TM1040) (Silicibacter sp.).